Consider the following 312-residue polypeptide: 4-diphosphocytidyl-2-C-methyl-D-erythritol kinase (312 aa).

Lysine 16 is an active-site residue. Residue 101–111 participates in ATP binding; the sequence is PIGAGLAGGSS. Aspartate 143 is an active-site residue.

The protein belongs to the GHMP kinase family. IspE subfamily.

It catalyses the reaction 4-CDP-2-C-methyl-D-erythritol + ATP = 4-CDP-2-C-methyl-D-erythritol 2-phosphate + ADP + H(+). It participates in isoprenoid biosynthesis; isopentenyl diphosphate biosynthesis via DXP pathway; isopentenyl diphosphate from 1-deoxy-D-xylulose 5-phosphate: step 3/6. Functionally, catalyzes the phosphorylation of the position 2 hydroxy group of 4-diphosphocytidyl-2C-methyl-D-erythritol. The chain is 4-diphosphocytidyl-2-C-methyl-D-erythritol kinase from Prochlorococcus marinus (strain MIT 9515).